A 316-amino-acid chain; its full sequence is Transcription termination/antitermination protein NusG (316 aa).

The protein belongs to the NusG family.

Its function is as follows. Participates in transcription elongation, termination and antitermination. In Mycoplasma genitalium (strain ATCC 33530 / DSM 19775 / NCTC 10195 / G37) (Mycoplasmoides genitalium), this protein is Transcription termination/antitermination protein NusG.